The following is a 64-amino-acid chain: Large ribosomal subunit protein uL29 (64 aa).

It belongs to the universal ribosomal protein uL29 family.

This is Large ribosomal subunit protein uL29 from Ralstonia pickettii (strain 12J).